The primary structure comprises 863 residues: Protein ARG5,6, mitochondrial (863 aa).

A mitochondrion-targeting transit peptide spans 1 to 65 (MPSASLLVST…RYVSSTNGFS (65 aa)). One can recognise an N-acetyltransferase domain in the interval 353-505 (KLVKRSSIGE…NFVKSCDTAS (153 aa)). Ser359 carries the phosphoserine modification. Residue Cys675 is part of the active site.

The protein in the N-terminal section; belongs to the acetylglutamate kinase family. This sequence in the C-terminal section; belongs to the NAGSA dehydrogenase family. In terms of processing, the protein precursor is cleaved into the two biologically active enzymes, the kinase and the reductase.

It is found in the mitochondrion. It catalyses the reaction N-acetyl-L-glutamate 5-semialdehyde + phosphate + NADP(+) = N-acetyl-L-glutamyl 5-phosphate + NADPH + H(+). The enzyme catalyses N-acetyl-L-glutamate + ATP = N-acetyl-L-glutamyl 5-phosphate + ADP. The protein operates within amino-acid biosynthesis; L-arginine biosynthesis; N(2)-acetyl-L-ornithine from L-glutamate: step 2/4. Its pathway is amino-acid biosynthesis; L-arginine biosynthesis; N(2)-acetyl-L-ornithine from L-glutamate: step 3/4. The kinase activity is inhibited by arginine. This Saccharomyces cerevisiae (strain ATCC 204508 / S288c) (Baker's yeast) protein is Protein ARG5,6, mitochondrial (ARG5,6).